The chain runs to 469 residues: Uronate isomerase (469 aa).

The protein belongs to the metallo-dependent hydrolases superfamily. Uronate isomerase family.

It catalyses the reaction D-glucuronate = D-fructuronate. The catalysed reaction is aldehydo-D-galacturonate = keto-D-tagaturonate. The protein operates within carbohydrate metabolism; pentose and glucuronate interconversion. The sequence is that of Uronate isomerase from Rhizobium meliloti (strain 1021) (Ensifer meliloti).